We begin with the raw amino-acid sequence, 248 residues long: MKWKEQAVILGVRQYGETSVILEIITRERGRYMGVVKGGRSRRMAALLQPGNFVEAEWSARLEEHLGLFRLEALDFHAARLICLPEALYALQLIAFHLRLLPERDPHPVLYDILHLFMQNFDEPFVNAELLVRFEMRLLEELGFGLDLSCCAATGRKQKLYYVSPKSGRAVCEEAGEPWKKKLLILPQFLVQRATRPADFRDIINGFNLTSFFLMRYVWEPRDIKQPSVRTNLIQLFERRFGIQAFIC.

The protein belongs to the RecO family.

Its function is as follows. Involved in DNA repair and RecF pathway recombination. The sequence is that of DNA repair protein RecO from Bartonella tribocorum (strain CIP 105476 / IBS 506).